The following is a 200-amino-acid chain: Probable GTP-binding protein EngB (200 aa).

The region spanning 26–200 is the EngB-type G domain; the sequence is SIPEVALAGR…IYEIAQCIKK (175 aa). Residues 34-41, 61-65, 80-83, 147-150, and 179-181 contribute to the GTP site; these read GRSNVGKS, GCTRQ, DLPG, TKID, and VSS. Mg(2+)-binding residues include Ser41 and Thr63.

It belongs to the TRAFAC class TrmE-Era-EngA-EngB-Septin-like GTPase superfamily. EngB GTPase family. The cofactor is Mg(2+).

Functionally, necessary for normal cell division and for the maintenance of normal septation. In Ehrlichia ruminantium (strain Welgevonden), this protein is Probable GTP-binding protein EngB.